A 353-amino-acid polypeptide reads, in one-letter code: Ribosomal RNA small subunit methyltransferase H (353 aa).

S-adenosyl-L-methionine-binding positions include 49-51 (GGH), aspartate 68, phenylalanine 95, aspartate 126, and glutamine 133.

Belongs to the methyltransferase superfamily. RsmH family.

It is found in the cytoplasm. It carries out the reaction cytidine(1402) in 16S rRNA + S-adenosyl-L-methionine = N(4)-methylcytidine(1402) in 16S rRNA + S-adenosyl-L-homocysteine + H(+). Functionally, specifically methylates the N4 position of cytidine in position 1402 (C1402) of 16S rRNA. The polypeptide is Ribosomal RNA small subunit methyltransferase H (Corynebacterium urealyticum (strain ATCC 43042 / DSM 7109)).